Consider the following 117-residue polypeptide: Large ribosomal subunit protein bL20c (117 aa).

Belongs to the bacterial ribosomal protein bL20 family.

The protein resides in the plastid. In terms of biological role, binds directly to 23S ribosomal RNA and is necessary for the in vitro assembly process of the 50S ribosomal subunit. It is not involved in the protein synthesizing functions of that subunit. This Euglena longa (Euglenophycean alga) protein is Large ribosomal subunit protein bL20c (rpl20).